Reading from the N-terminus, the 334-residue chain is MAYRICLIEGDGIGHEVIPAARRVLEATGLPLEFVEAEAGWETFERRGTSVPEETVEKILSCHATLFGAATSPTRKVPGFFGAIRYLRRRLDLYANVRPAKSRPVPGSRPGVDLVIVRENTEGLYVEQERRYLDVAIADAVISKKASERIGRAALRIAEGRPRKTLHIAHKANVLPLTQGLFLDTVKEVAKDFPLVNVQDIIVDNCAMQLVMRPERFDVIVTTNLLGDILSDLAAGLVGGLGLAPSGNIGDTTAVFEPVHGSAPDIAGKGIANPTAAILSAAMMLDYLGEKEAAKRVEKAVDLVLERGPRTPDLGGDATTEAFTEAVVEALKSL.

Position 70-72 (70-72 (ATS)) interacts with NADH. Residues Ser72, Arg85, Arg88, Arg98, Arg118, Tyr125, Lys171, and Asn173 each contribute to the (2R,3S)-homoisocitrate site. Residue Asn173 participates in NADH binding. 3 residues coordinate Mg(2+): Asp204, Asp228, and Asp232. Residues 261-265 (GSAPD) and Asn273 contribute to the NADH site.

Belongs to the isocitrate and isopropylmalate dehydrogenases family. Homotetramer. Dimer of dimers. The homotetramer can transiently dissociate into homodimers. Requires Mg(2+) as cofactor.

The enzyme catalyses (2R,3S)-homoisocitrate + NAD(+) = 2-oxoadipate + CO2 + NADH. It catalyses the reaction D-threo-isocitrate + NAD(+) = 2-oxoglutarate + CO2 + NADH. Its pathway is amino-acid biosynthesis; L-lysine biosynthesis via AAA pathway; L-alpha-aminoadipate from 2-oxoglutarate: step 4/5. Functionally, catalyzes the NAD(+)-dependent oxidative decarboxylation of homoisocitrate to 2-oxoadipate (alpha-ketoadipate), a reaction involved in lysine biosynthesis through the alpha-aminoadipate pathway. In addition, has high activity with isocitrate, but is inactive with 3-isopropylmalate. The polypeptide is Isocitrate/homoisocitrate dehydrogenase (hicd) (Thermus thermophilus (strain ATCC BAA-163 / DSM 7039 / HB27)).